We begin with the raw amino-acid sequence, 366 residues long: Histidinol-phosphate aminotransferase 1 (366 aa).

N6-(pyridoxal phosphate)lysine is present on Lys226.

This sequence belongs to the class-II pyridoxal-phosphate-dependent aminotransferase family. Histidinol-phosphate aminotransferase subfamily. Homodimer. Pyridoxal 5'-phosphate is required as a cofactor.

It carries out the reaction L-histidinol phosphate + 2-oxoglutarate = 3-(imidazol-4-yl)-2-oxopropyl phosphate + L-glutamate. The protein operates within amino-acid biosynthesis; L-histidine biosynthesis; L-histidine from 5-phospho-alpha-D-ribose 1-diphosphate: step 7/9. The protein is Histidinol-phosphate aminotransferase 1 of Mannheimia succiniciproducens (strain KCTC 0769BP / MBEL55E).